The following is a 105-amino-acid chain: Ribonuclease P protein component 4 (105 aa).

Zn(2+) contacts are provided by Cys-63, Cys-66, Cys-89, and Cys-92.

The protein belongs to the eukaryotic/archaeal RNase P protein component 4 family. In terms of assembly, consists of a catalytic RNA component and at least 4-5 protein subunits. Zn(2+) is required as a cofactor.

The protein resides in the cytoplasm. The catalysed reaction is Endonucleolytic cleavage of RNA, removing 5'-extranucleotides from tRNA precursor.. Functionally, part of ribonuclease P, a protein complex that generates mature tRNA molecules by cleaving their 5'-ends. This chain is Ribonuclease P protein component 4, found in Methanoculleus marisnigri (strain ATCC 35101 / DSM 1498 / JR1).